The sequence spans 371 residues: Large ribosomal subunit protein bL27m (371 aa).

The transit peptide at 1–27 (MWNPILLDTSSFSFQKHVSGVFLQVRN) directs the protein to the mitochondrion.

It belongs to the bacterial ribosomal protein bL27 family. As to quaternary structure, component of the mitochondrial large ribosomal subunit (mt-LSU). Mature yeast 74S mitochondrial ribosomes consist of a small (37S) and a large (54S) subunit. The 37S small subunit contains a 15S ribosomal RNA (15S mt-rRNA) and 34 different proteins. The 54S large subunit contains a 21S rRNA (21S mt-rRNA) and 46 different proteins.

It is found in the mitochondrion. Functionally, component of the mitochondrial ribosome (mitoribosome), a dedicated translation machinery responsible for the synthesis of mitochondrial genome-encoded proteins, including at least some of the essential transmembrane subunits of the mitochondrial respiratory chain. The mitoribosomes are attached to the mitochondrial inner membrane and translation products are cotranslationally integrated into the membrane. The polypeptide is Large ribosomal subunit protein bL27m (MRP7) (Saccharomyces cerevisiae (strain ATCC 204508 / S288c) (Baker's yeast)).